A 141-amino-acid polypeptide reads, in one-letter code: HTH-type transcriptional repressor NsrR (141 aa).

The HTH rrf2-type domain maps to 2 to 129; it reads QLTSFTDYAL…DECTIESLLS (128 aa). Residues 28–51 constitute a DNA-binding region (H-T-H motif); the sequence is ITEVTDLFGVSRNHMVKVINRLGQ. 3 residues coordinate [2Fe-2S] cluster: Cys-91, Cys-96, and Cys-102.

It depends on [2Fe-2S] cluster as a cofactor.

In terms of biological role, nitric oxide-sensitive repressor of genes involved in protecting the cell against nitrosative stress. May require iron for activity. The polypeptide is HTH-type transcriptional repressor NsrR (Vibrio parahaemolyticus serotype O3:K6 (strain RIMD 2210633)).